The primary structure comprises 217 residues: Probable GTP-binding protein EngB (217 aa).

Residues 33 to 217 (GPTEIAFAGR…RAAIELAVTR (185 aa)) form the EngB-type G domain. GTP-binding positions include 41-48 (GRSNVGKS), 68-72 (GRTQE), 95-98 (DMPG), 162-165 (TKTD), and 196-198 (TSS). Ser-48 and Thr-70 together coordinate Mg(2+).

The protein belongs to the TRAFAC class TrmE-Era-EngA-EngB-Septin-like GTPase superfamily. EngB GTPase family. Mg(2+) is required as a cofactor.

Functionally, necessary for normal cell division and for the maintenance of normal septation. This Rhizobium meliloti (strain 1021) (Ensifer meliloti) protein is Probable GTP-binding protein EngB.